We begin with the raw amino-acid sequence, 303 residues long: ATP synthase gamma chain (303 aa).

Belongs to the ATPase gamma chain family. In terms of assembly, F-type ATPases have 2 components, CF(1) - the catalytic core - and CF(0) - the membrane proton channel. CF(1) has five subunits: alpha(3), beta(3), gamma(1), delta(1), epsilon(1). CF(0) has three main subunits: a, b and c.

Its subcellular location is the cell inner membrane. Its function is as follows. Produces ATP from ADP in the presence of a proton gradient across the membrane. The gamma chain is believed to be important in regulating ATPase activity and the flow of protons through the CF(0) complex. The polypeptide is ATP synthase gamma chain (Bartonella henselae (strain ATCC 49882 / DSM 28221 / CCUG 30454 / Houston 1) (Rochalimaea henselae)).